Consider the following 400-residue polypeptide: Elongation factor Tu (400 aa).

A tr-type G domain is found at 10 to 209 (KPHVNIGTIG…VVDKYIPTPQ (200 aa)). The segment at 19–26 (GHVDHGKT) is G1. 19–26 (GHVDHGKT) lines the GTP pocket. Threonine 26 is a binding site for Mg(2+). Residues 60 to 64 (GITIN) form a G2 region. A G3 region spans residues 81–84 (DCPG). Residues 81 to 85 (DCPGH) and 136 to 139 (NKVD) each bind GTP. The segment at 136 to 139 (NKVD) is G4. The tract at residues 174–176 (SAL) is G5.

It belongs to the TRAFAC class translation factor GTPase superfamily. Classic translation factor GTPase family. EF-Tu/EF-1A subfamily. In terms of assembly, monomer.

It localises to the cytoplasm. It carries out the reaction GTP + H2O = GDP + phosphate + H(+). Functionally, GTP hydrolase that promotes the GTP-dependent binding of aminoacyl-tRNA to the A-site of ribosomes during protein biosynthesis. The chain is Elongation factor Tu from Caldicellulosiruptor saccharolyticus (strain ATCC 43494 / DSM 8903 / Tp8T 6331).